Consider the following 131-residue polypeptide: Putative protein PTGES3L (131 aa).

Positions 3–91 (RQPARTLWYD…KEKVAWPRLT (89 aa)) constitute a CS domain.

Belongs to the p23/wos2 family.

This Mus musculus (Mouse) protein is Putative protein PTGES3L (Ptges3l).